A 187-amino-acid chain; its full sequence is MIDTKQLIKAGEEKMTFAIEYLDEQLSHIRAGKANPKILDCVKVMYYGAPVPLTNVATVTVPDARTIMITPWEKKIIRDIEKGILDSELGITPENNGEVIRLGIPPLTEERRRQLVKQCKQEAENAKISVRNARRDAIEALKKSIKSDGVPEDVEKDAEAEVQKIHDKFIKKIDELYAAKEKEVMTV.

Belongs to the RRF family.

Its subcellular location is the cytoplasm. Functionally, responsible for the release of ribosomes from messenger RNA at the termination of protein biosynthesis. May increase the efficiency of translation by recycling ribosomes from one round of translation to another. The chain is Ribosome-recycling factor from Parabacteroides distasonis (strain ATCC 8503 / DSM 20701 / CIP 104284 / JCM 5825 / NCTC 11152).